The sequence spans 421 residues: Nuclear speckle RNA-binding protein B (421 aa).

3 disordered regions span residues methionine 1–tyrosine 64, threonine 86–threonine 114, and threonine 197–histidine 226. Residues proline 33–proline 44 are compositionally biased toward pro residues. Positions threonine 89–serine 103 are enriched in low complexity. The RRM domain maps to asparagine 323–asparagine 409.

Isoform 1: Expressed in root meristems, lateral root primordia, root vascular tissues and cotyledon vascular tissues. Isoform 2: Expressed in root meristems, lateral root primordia and root vascular tissues.

It localises to the nucleus speckle. Its function is as follows. Alternative splicing (AS) regulator that binds to specific mRNAs and modulates auxin effects on the transcriptome. Displaced from its targets upon binding to AS competitor long non-coding RNA (ASCO-RNA). The sequence is that of Nuclear speckle RNA-binding protein B from Arabidopsis thaliana (Mouse-ear cress).